The primary structure comprises 242 residues: Venom nerve growth factor 1 (242 aa).

A signal peptide spans 1–18 (MSMLCYTLIIAFLIGIWA). The propeptide occupies 19-125 (APQSEDNVPL…ALNRNIQAKR (107 aa)). Intrachain disulfides connect cysteine 139–cysteine 203, cysteine 181–cysteine 231, and cysteine 191–cysteine 233.

It belongs to the NGF-beta family. In terms of assembly, homodimer; non-covalently linked. In terms of tissue distribution, expressed by the venom gland.

The protein resides in the secreted. Nerve growth factor is important for the development and maintenance of the sympathetic and sensory nervous systems. It stimulates division and differentiation of sympathetic and embryonic sensory neurons as well as basal forebrain cholinergic neurons in the brain. Its relevance in the snake venom is not clear. However, it has been shown to inhibit metalloproteinase-dependent proteolysis of platelet glycoprotein Ib alpha, suggesting a metalloproteinase inhibition to prevent metalloprotease autodigestion and/or protection against prey proteases. Binds a lipid between the two protein chains in the homodimer. The lipid-bound form promotes histamine relase from mouse mast cells, contrary to the lipid-free form. The polypeptide is Venom nerve growth factor 1 (Pseudechis australis (Mulga snake)).